Consider the following 704-residue polypeptide: Elongation factor G (704 aa).

Positions 10-290 constitute a tr-type G domain; it reads NKVRNIGIMA…AVVDFLPSPL (281 aa). GTP contacts are provided by residues 19–26, 83–87, and 137–140; these read AHIDAGKT, DTPGH, and NKMD. The segment at 293–313 is disordered; it reads PPMIGHDPRNEETEMTRKPST. The segment covering 298-313 has biased composition (basic and acidic residues); that stretch reads HDPRNEETEMTRKPST.

This sequence belongs to the TRAFAC class translation factor GTPase superfamily. Classic translation factor GTPase family. EF-G/EF-2 subfamily.

It is found in the cytoplasm. Functionally, catalyzes the GTP-dependent ribosomal translocation step during translation elongation. During this step, the ribosome changes from the pre-translocational (PRE) to the post-translocational (POST) state as the newly formed A-site-bound peptidyl-tRNA and P-site-bound deacylated tRNA move to the P and E sites, respectively. Catalyzes the coordinated movement of the two tRNA molecules, the mRNA and conformational changes in the ribosome. The protein is Elongation factor G of Renibacterium salmoninarum (strain ATCC 33209 / DSM 20767 / JCM 11484 / NBRC 15589 / NCIMB 2235).